The following is a 554-amino-acid chain: 2-succinyl-5-enolpyruvyl-6-hydroxy-3-cyclohexene-1-carboxylate synthase (554 aa).

This sequence belongs to the TPP enzyme family. MenD subfamily. Homodimer. The cofactor is Mg(2+). Mn(2+) serves as cofactor. Thiamine diphosphate is required as a cofactor.

The catalysed reaction is isochorismate + 2-oxoglutarate + H(+) = 5-enolpyruvoyl-6-hydroxy-2-succinyl-cyclohex-3-ene-1-carboxylate + CO2. It participates in quinol/quinone metabolism; 1,4-dihydroxy-2-naphthoate biosynthesis; 1,4-dihydroxy-2-naphthoate from chorismate: step 2/7. It functions in the pathway quinol/quinone metabolism; menaquinone biosynthesis. In terms of biological role, catalyzes the thiamine diphosphate-dependent decarboxylation of 2-oxoglutarate and the subsequent addition of the resulting succinic semialdehyde-thiamine pyrophosphate anion to isochorismate to yield 2-succinyl-5-enolpyruvyl-6-hydroxy-3-cyclohexene-1-carboxylate (SEPHCHC). In Renibacterium salmoninarum (strain ATCC 33209 / DSM 20767 / JCM 11484 / NBRC 15589 / NCIMB 2235), this protein is 2-succinyl-5-enolpyruvyl-6-hydroxy-3-cyclohexene-1-carboxylate synthase.